The chain runs to 598 residues: UvrABC system protein C (598 aa).

The GIY-YIG domain occupies 14–91 (DSPGCYLHKD…IQKNMPKYNI (78 aa)). Residues 196–231 (DKIIEDLRSKMLAASEEMAFERAAEYRDLISGIATM) form the UVR domain.

This sequence belongs to the UvrC family. Interacts with UvrB in an incision complex.

It is found in the cytoplasm. The UvrABC repair system catalyzes the recognition and processing of DNA lesions. UvrC both incises the 5' and 3' sides of the lesion. The N-terminal half is responsible for the 3' incision and the C-terminal half is responsible for the 5' incision. The chain is UvrABC system protein C from Streptococcus pyogenes serotype M6 (strain ATCC BAA-946 / MGAS10394).